Consider the following 108-residue polypeptide: Cell division topological specificity factor (108 aa).

This sequence belongs to the MinE family.

Functionally, prevents the cell division inhibition by proteins MinC and MinD at internal division sites while permitting inhibition at polar sites. This ensures cell division at the proper site by restricting the formation of a division septum at the midpoint of the long axis of the cell. In Prochlorococcus marinus (strain AS9601), this protein is Cell division topological specificity factor.